The chain runs to 785 residues: Cadherin-7 (785 aa).

A signal peptide spans 1 to 27 (MKLGKVEFCHFLQLIALFLCFSGMSQA). Positions 28 to 47 (ELSRSRSKPYFQSGRSRTKR) are excised as a propeptide. Over 28 to 607 (ELSRSRSKPY…AYVLPAGLST (580 aa)) the chain is Extracellular. 5 consecutive Cadherin domains span residues 49 to 153 (WVWN…EPKF), 154 to 262 (LDGP…PPRF), 263 to 377 (PRRS…PPVF), 378 to 482 (SSPL…APEF), and 482 to 599 (FAMD…AEAY). N-linked (GlcNAc...) asparagine glycosylation is found at Asn-449 and Asn-530. Residues 608–628 (GALIAILACVLTLLVLILLIV) traverse the membrane as a helical segment. The Cytoplasmic portion of the chain corresponds to 629–785 (TMRRRKKEPL…YGTGQESLYS (157 aa)).

The protein resides in the cell membrane. Functionally, cadherins are calcium-dependent cell adhesion proteins. They preferentially interact with themselves in a homophilic manner in connecting cells; cadherins may thus contribute to the sorting of heterogeneous cell types. The sequence is that of Cadherin-7 (CDH7) from Homo sapiens (Human).